The following is a 353-amino-acid chain: Protein RecA (353 aa).

68 to 75 (GPESSGKT) contacts ATP.

It belongs to the RecA family.

The protein localises to the cytoplasm. In terms of biological role, can catalyze the hydrolysis of ATP in the presence of single-stranded DNA, the ATP-dependent uptake of single-stranded DNA by duplex DNA, and the ATP-dependent hybridization of homologous single-stranded DNAs. It interacts with LexA causing its activation and leading to its autocatalytic cleavage. The polypeptide is Protein RecA (Roseiflexus castenholzii (strain DSM 13941 / HLO8)).